The primary structure comprises 101 residues: Small ribosomal subunit protein uS14 (101 aa).

It belongs to the universal ribosomal protein uS14 family. In terms of assembly, part of the 30S ribosomal subunit. Contacts proteins S3 and S10.

Functionally, binds 16S rRNA, required for the assembly of 30S particles and may also be responsible for determining the conformation of the 16S rRNA at the A site. The sequence is that of Small ribosomal subunit protein uS14 from Caulobacter sp. (strain K31).